Consider the following 533-residue polypeptide: Acid-sensing ion channel 3 (533 aa).

Residues 1–19 (MKPRSGLEEAQRRQASDIR) lie on the Cytoplasmic side of the membrane. A helical transmembrane segment spans residues 20–40 (VFASSCTMHGLGHIFGPGGLT). T40 carries the phosphothreonine; by PKC modification. Over 41–435 (LRRGLWATAV…EQKAAYEVSE (395 aa)) the chain is Extracellular. 7 disulfides stabilise this stretch: C93–C187, C165–C172, C283–C372, C317–C368, C321–C366, C330–C352, and C332–C344. The N-linked (GlcNAc...) asparagine glycan is linked to N176. Residues 286-310 (ASLDPDDFDPEPSDPLGSPRPRPSP) form a disordered region. A glycan (N-linked (GlcNAc...) asparagine) is linked at N400. Residues 436 to 456 (LLGDIGGQMGLFIGASLLTIL) traverse the membrane as a helical segment. A GAS motif; ion selectivity filter motif is present at residues 449–451 (GAS). The Cytoplasmic portion of the chain corresponds to 457–533 (EILDYLCEVF…HRTCYLVTRL (77 aa)). Position 523 is a phosphoserine; by PKC (S523). Residues 530–533 (VTRL) carry the PDZ-binding motif.

Belongs to the amiloride-sensitive sodium channel (TC 1.A.6) family. ASIC3 subfamily. In terms of assembly, can form homotrimeric channels. Heterotrimer; forms functional heterotrimers producing channel with different properties. Forms heterotrimers with ASIC2; gives rise to a biphasic current with a sustained current which discriminates poorly between Na(+) and K(+). Interacts with STOM; inhibits ASIC3 acid-evoked current. Interacts with LIN7B (via PDZ domain); increases ASIC3 expression at the plasma membrane. Interacts with MAGI1 (via PDZ domain); probably regulates ASIC3. Interacts with GOPC (via PDZ domain); probably regulates ASIC3. Interacts with DLG4 (via PDZ domain); reduces ASIC3 expression at the plasma membrane. Post-translationally, could be phosphorylated by PKC, promoting activation of ASIC2/ASIC3 heterotrimers. In terms of tissue distribution, expressed in sciatic nerve and dorsal root ganglion (at protein level). Expressed in sensory neurons of dorsal root ganglion. Expressed in Golgi interneurons in the granular layer. Also found in superior cervical ganglia, spinal cord and brain stem.

It localises to the cell membrane. The protein localises to the cytoplasm. The catalysed reaction is Na(+)(in) = Na(+)(out). It catalyses the reaction K(+)(in) = K(+)(out). The enzyme catalyses Ca(2+)(in) = Ca(2+)(out). Its activity is regulated as follows. Inhibited by the diuretic drug amiloride. Inhibited by gadolinium ions. Inhibited by extracellular Ca(2+). Activated by lactate. Salicylic acid, diclofenac and aspirin inhibit the sustained current component. Activated by the vertebrate neuropeptides NPFF and NPSF, and the related FMRFamide. Specifically and reversibly inhibited by the a sea anemone toxin APETx2. ASIC3-containing channels are potentiated by the cono-RFamide CNF-Tx1.1, and probably CNF-Tx1.2 and CNF-Tx1.3 (AC P0DL71). Forms pH-gated heterotrimeric sodium channels that act as postsynaptic excitatory receptors in the nervous system. Upon extracellular acidification, these channels generate a biphasic current with a fast inactivating and a slow sustained phase. ASIC3 is more sensitive to protons and gates between closed, open, and desensitized states faster than other ASICs. Displays high selectivity for sodium ions but can also permit the permeation of other cations. As a neuronal acid sensor, probably contributes to mechanoreception, acid nociception, and heat nociception. By forming heterotrimeric channels with ASIC2, generates a biphasic current with a fast inactivating and a slow sustained phase, which in sensory neurons is proposed to mediate the pain induced by acidosis that occurs in ischemic, damaged or inflamed tissues. This is Acid-sensing ion channel 3 from Rattus norvegicus (Rat).